The chain runs to 392 residues: MSLAHTAAEYMLSDALLPDRRGSRLKGLRLELPLDKMVKFVTVGFPLLLMSLAFAQEFSSGSPISCFSPSNFSVRQAVFVDSSCWDSLAHYKQDEAGQYTVKSLWPHKALPYSLLALAVAMYLPVLLWQYAAVPALSSDLLFIISELDKSYNRSIRLVQHMLKIRQKSSDPHVFWDELEKARKERYFEFPLLERYLACKQRSHWLVATYLLRNALLLLFTSATYLYLGHFHLDVFFQEEFSCSIKTGLLHEETHVPELITCRLTSLSVFQIVSVSSVAIYTVLVPVIIYNLTRLCRWDKRLLSIYEMLPAFDLLSRKMLGCPINDLNVILLFLRANISELISFSWLSVLCVLKDTTTQKHNIDTVVDFMTLLAGLEPSKPKHLTQHTYDEHP.

Topologically, residues 1-39 are cytoplasmic; that stretch reads MSLAHTAAEYMLSDALLPDRRGSRLKGLRLELPLDKMVK. The helical transmembrane segment at 40 to 60 threads the bilayer; sequence FVTVGFPLLLMSLAFAQEFSS. Residues 61–113 are Extracellular-facing; the sequence is GSPISCFSPSNFSVRQAVFVDSSCWDSLAHYKQDEAGQYTVKSLWPHKALPYS. Residue Asn-71 is glycosylated (N-linked (GlcNAc...) asparagine). The helical transmembrane segment at 114-134 threads the bilayer; it reads LLALAVAMYLPVLLWQYAAVP. Over 135 to 215 the chain is Cytoplasmic; it reads ALSSDLLFII…VATYLLRNAL (81 aa). The chain crosses the membrane as a helical span at residues 216–236; that stretch reads LLLFTSATYLYLGHFHLDVFF. Over 237–267 the chain is Extracellular; the sequence is QEEFSCSIKTGLLHEETHVPELITCRLTSLS. A helical membrane pass occupies residues 268–288; it reads VFQIVSVSSVAIYTVLVPVII. Residues 289–392 are Cytoplasmic-facing; sequence YNLTRLCRWD…LTQHTYDEHP (104 aa).

The protein belongs to the pannexin family. As to quaternary structure, homoheptameric. Skin.

The protein resides in the cell membrane. The protein localises to the cell junction. It localises to the gap junction. It is found in the endoplasmic reticulum membrane. It carries out the reaction Ca(2+)(in) = Ca(2+)(out). The enzyme catalyses ATP(in) = ATP(out). Its function is as follows. Regulator of osteoblast differentiation by functionning as a Ca(2+) channel in the endoplasmic reticulum which regulates calmodulin (CaM) pathways. Allows ATP release into the extracellular space and activation or purinergic receptors. This chain is Pannexin-3 (Panx3), found in Rattus norvegicus (Rat).